A 252-amino-acid polypeptide reads, in one-letter code: Ribosomal RNA small subunit methyltransferase NEP1 (252 aa).

S-adenosyl-L-methionine-binding positions include Met-176, Gly-209, Gly-214, and 227–232; that span reads ISNYPL.

The protein belongs to the class IV-like SAM-binding methyltransferase superfamily. RNA methyltransferase NEP1 family. Homodimer. Part of the small subunit (SSU) processome, composed of more than 70 proteins and the RNA chaperone small nucleolar RNA (snoRNA) U3.

It is found in the nucleus. The protein localises to the nucleolus. It carries out the reaction a pseudouridine in rRNA + S-adenosyl-L-methionine = an N(1)-methylpseudouridine in rRNA + S-adenosyl-L-homocysteine + H(+). Its function is as follows. S-adenosyl-L-methionine-dependent pseudouridine N(1)-methyltransferase that methylates a pseudouridine in 18S rRNA. Involved the biosynthesis of the hypermodified N1-methyl-N3-(3-amino-3-carboxypropyl) pseudouridine (m1acp3-Psi) conserved in eukaryotic 18S rRNA. Also has an essential role in 40S ribosomal subunit biogenesis independent on its methyltransferase activity, facilitating the incorporation of ribosomal protein S19 during the formation of pre-ribosomes. Functionally, S-adenosyl-L-methionine-dependent pseudouridine N(1)-methyltransferase that methylates pseudouridine at position in 18S rRNA. Involved the biosynthesis of the hypermodified N1-methyl-N3-(3-amino-3-carboxypropyl) pseudouridine (m1acp3-Psi) conserved in eukaryotic 18S rRNA. Is not able to methylate uridine at this position. Also has an essential role in 40S ribosomal subunit biogenesis independent on its methyltransferase activity, facilitating the incorporation of ribosomal protein S19 during the formation of pre-ribosomes. Part of the small subunit (SSU) processome, first precursor of the small eukaryotic ribosomal subunit. During the assembly of the SSU processome in the nucleolus, many ribosome biogenesis factors, an RNA chaperone and ribosomal proteins associate with the nascent pre-rRNA and work in concert to generate RNA folding, modifications, rearrangements and cleavage as well as targeted degradation of pre-ribosomal RNA by the RNA exosome. This chain is Ribosomal RNA small subunit methyltransferase NEP1, found in Drosophila melanogaster (Fruit fly).